The sequence spans 309 residues: GFADLMGYIPLVGAPLGGAARALAHGVRVLEDGVNYATGNLPGCSFSIFLLALLSCLTVPASAYQVRNSSGIYHVTNDCPNSSIVYETADTILHSPGCVPCVREGNASKCWVPVAPTVATRDGNLPATQLRRHIDLLVGSATLCSALYVGDLCGSVFLVGQLFTFSPRRHWTTQDCNCSIYPGHITGHRMAWDMMMNWSPTAALVMAQLLRIPQAILDMIAGAHWGVLAGIAYFSMVGNWAKVLVVLLLFAGVDATTYTTGGNAARTTQALTSFFSPGAKQDIQLINTNGSWHINRTALNCNASLDTGW.

Over 1–40 (GFADLMGYIPLVGAPLGGAARALAHGVRVLEDGVNYATGN) the chain is Cytoplasmic. Residues 36 to 39 (YATG) form an important for lipid droplets localization region. Residues 41 to 61 (LPGCSFSIFLLALLSCLTVPA) form a helical membrane-spanning segment. The propeptide at 50 to 63 (LLALLSCLTVPASA) is ER anchor for the core protein, removed in mature form by host signal peptidase. Topologically, residues 62-230 (SAYQVRNSSG…AGAHWGVLAG (169 aa)) are lumenal. N-linked (GlcNAc...) asparagine; by host glycosylation is found at Asn-68, Asn-81, and Asn-106. Residues 137–168 (LVGSATLCSALYVGDLCGSVFLVGQLFTFSPR) form an important for fusion region. Residue Asn-177 is glycosylated (N-linked (GlcNAc...) asparagine; by host). The helical transmembrane segment at 231-251 (IAYFSMVGNWAKVLVVLLLFA) threads the bilayer. Topologically, residues 252–309 (GVDATTYTTGGNAARTTQALTSFFSPGAKQDIQLINTNGSWHINRTALNCNASLDTGW) are lumenal. The segment at 256 to 282 (TTYTTGGNAARTTQALTSFFSPGAKQD) is HVR1. 3 N-linked (GlcNAc...) (high mannose) asparagine; by host glycosylation sites follow: Asn-289, Asn-295, and Asn-302.

This sequence belongs to the hepacivirus polyprotein family. As to quaternary structure, homooligomer. Interacts with E1 (via C-terminus). Interacts with the non-structural protein 5A. Interacts (via N-terminus) with host STAT1 (via SH2 domain); this interaction results in decreased STAT1 phosphorylation and ubiquitin-mediated proteasome-dependent STAT1 degradation, leading to decreased IFN-stimulated gene transcription. Interacts with host STAT3; this interaction constitutively activates STAT3. Interacts with host LTBR receptor. Interacts with host TNFRSF1A receptor and possibly induces apoptosis. Interacts with host HNRPK. Interacts with host YWHAE. Interacts with host UBE3A/E6AP. Interacts with host DDX3X. Interacts with host APOA2. Interacts with host RXRA protein. Interacts with host SP110 isoform 3/Sp110b; this interaction sequesters the transcriptional corepressor SP110 away from the nucleus. Interacts with host CREB3 nuclear transcription protein; this interaction triggers cell transformation. Interacts with host ACY3. Interacts with host C1QR1. Interacts with host RBM24; this interaction, which enhances the interaction of the mature core protein with 5'-UTR, may inhibit viral translation and favor replication. Interacts with host EIF2AK2/PKR; this interaction induces the autophosphorylation of EIF2AK2. Part of the viral assembly initiation complex composed of NS2, E1, E2, NS3, NS4A, NS5A and the mature core protein. In terms of assembly, forms a heterodimer with envelope glycoprotein E2. Interacts with mature core protein. Interacts with protease NS2. The heterodimer E1/E2 interacts with host CLDN1; this interaction plays a role in viral entry into host cell. Interacts with host SPSB2 (via C-terminus). Part of the viral assembly initiation complex composed of NS2, E1, E2, NS3, NS4A, NS5A and the mature core protein. Forms a heterodimer with envelope glycoprotein E1. Interacts with host CD81 and SCARB1 receptors; these interactions play a role in viral entry into host cell. Interacts with host EIF2AK2/PKR; this interaction inhibits EIF2AK2 and probably allows the virus to evade the innate immune response. Interacts with host CD209/DC-SIGN and CLEC4M/DC-SIGNR. Interact with host SPCS1; this interaction is essential for viral particle assembly. Interacts with protease NS2. The heterodimer E1/E2 interacts with host CLDN1; this interaction plays a role in viral entry into host cell. Part of the viral assembly initiation complex composed of NS2, E1, E2, NS3, NS4A, NS5A and the mature core protein. Specific enzymatic cleavages in vivo yield mature proteins. The structural proteins, core, E1, E2 and p7 are produced by proteolytic processing by host signal peptidases. The core protein precursor is synthesized as a 23 kDa, which is retained in the ER membrane through the hydrophobic signal peptide. Cleavage by the signal peptidase releases the 21 kDa mature core protein. The cleavage of the core protein precursor occurs between aminoacids 176 and 188 but the exact cleavage site is not known. Some degraded forms of the core protein appear as well during the course of infection. The other proteins (p7, NS2, NS3, NS4A, NS4B, NS5A and NS5B) are cleaved by the viral proteases. Autoprocessing between NS2 and NS3 is mediated by the NS2 cysteine protease catalytic domain and regulated by the NS3 N-terminal domain. Post-translationally, phosphorylated by host PKC and PKA. In terms of processing, ubiquitinated; mediated by UBE3A and leading to core protein subsequent proteasomal degradation. Highly N-glycosylated.

Its subcellular location is the host endoplasmic reticulum membrane. It localises to the host mitochondrion membrane. The protein localises to the virion. It is found in the host cytoplasm. The protein resides in the host nucleus. Its subcellular location is the host lipid droplet. It localises to the virion membrane. Functionally, packages viral RNA to form a viral nucleocapsid, and promotes virion budding. Participates in the viral particle production as a result of its interaction with the non-structural protein 5A. Binds RNA and may function as a RNA chaperone to induce the RNA structural rearrangements taking place during virus replication. Modulates viral translation initiation by interacting with viral IRES and 40S ribosomal subunit. Affects various cell signaling pathways, host immunity and lipid metabolism. Prevents the establishment of cellular antiviral state by blocking the interferon-alpha/beta (IFN-alpha/beta) and IFN-gamma signaling pathways and by blocking the formation of phosphorylated STAT1 and promoting ubiquitin-mediated proteasome-dependent degradation of STAT1. Activates STAT3 leading to cellular transformation. Regulates the activity of cellular genes, including c-myc and c-fos. May repress the promoter of p53, and sequester CREB3 and SP110 isoform 3/Sp110b in the cytoplasm. Represses cell cycle negative regulating factor CDKN1A, thereby interrupting an important check point of normal cell cycle regulation. Targets transcription factors involved in the regulation of inflammatory responses and in the immune response: suppresses TNF-induced NF-kappa-B activation, and activates AP-1. Binds to dendritic cells (DCs) via C1QR1, resulting in down-regulation of T-lymphocytes proliferation. Alters lipid metabolism by interacting with hepatocellular proteins involved in lipid accumulation and storage. Induces up-regulation of FAS promoter activity, and thereby contributes to the increased triglyceride accumulation in hepatocytes (steatosis). Forms a heterodimer with envelope glycoprotein E2, which mediates virus attachment to the host cell, virion internalization through clathrin-dependent endocytosis and fusion with host membrane. Fusion with the host cell is most likely mediated by both E1 and E2, through conformational rearrangements of the heterodimer required for fusion rather than a classical class II fusion mechanism. E1/E2 heterodimer binds host apolipoproteins such as APOB and ApoE thereby forming a lipo-viro-particle (LVP). APOE associated to the LVP allows the initial virus attachment to cell surface receptors such as the heparan sulfate proteoglycans (HSPGs), syndecan-1 (SDC1), syndecan-1 (SDC2), the low-density lipoprotein receptor (LDLR) and scavenger receptor class B type I (SCARB1). The cholesterol transfer activity of SCARB1 allows E2 exposure and binding of E2 to SCARB1 and the tetraspanin CD81. E1/E2 heterodimer binding on CD81 activates the epithelial growth factor receptor (EGFR) signaling pathway. Diffusion of the complex E1-E2-EGFR-SCARB1-CD81 to the cell lateral membrane allows further interaction with Claudin 1 (CLDN1) and occludin (OCLN) to finally trigger HCV entry. Its function is as follows. Forms a heterodimer with envelope glycoprotein E1, which mediates virus attachment to the host cell, virion internalization through clathrin-dependent endocytosis and fusion with host membrane. Fusion with the host cell is most likely mediated by both E1 and E2, through conformational rearrangements of the heterodimer required for fusion rather than a classical class II fusion mechanism. The interaction between envelope glycoprotein E2 and host apolipoprotein E/APOE allows the proper assembly, maturation and infectivity of the viral particles. This interaction is probably promoted via the up-regulation of cellular autophagy by the virus. E1/E2 heterodimer binds host apolipoproteins such as APOB and APOE thereby forming a lipo-viro-particle (LVP). APOE associated to the LVP allows the initial virus attachment to cell surface receptors such as the heparan sulfate proteoglycans (HSPGs), syndecan-1 (SDC1), syndecan-1 (SDC2), the low-density lipoprotein receptor (LDLR) and scavenger receptor class B type I (SCARB1). The cholesterol transfer activity of SCARB1 allows E2 exposure and binding of E2 to SCARB1 and the tetraspanin CD81. E1/E2 heterodimer binding on CD81 activates the epithelial growth factor receptor (EGFR) signaling pathway. Diffusion of the complex E1-E2-EGFR-SCARB1-CD81 to the cell lateral membrane allows further interaction with Claudin 1 (CLDN1) and occludin (OCLN) to finally trigger HCV entry. Inhibits host EIF2AK2/PKR activation, preventing the establishment of an antiviral state. Viral ligand for CD209/DC-SIGN and CLEC4M/DC-SIGNR, which are respectively found on dendritic cells (DCs), and on liver sinusoidal endothelial cells and macrophage-like cells of lymph node sinuses. These interactions allow the capture of circulating HCV particles by these cells and subsequent facilitated transmission to permissive cells such as hepatocytes and lymphocyte subpopulations. This is Genome polyprotein from Hepatitis C virus (isolate HCT27) (HCV).